The chain runs to 219 residues: Thiamine-phosphate synthase (219 aa).

4-amino-2-methyl-5-(diphosphooxymethyl)pyrimidine-binding positions include 44–48 (QFREK) and N79. 2 residues coordinate Mg(2+): D80 and D99. A 4-amino-2-methyl-5-(diphosphooxymethyl)pyrimidine-binding site is contributed by S117. 2-[(2R,5Z)-2-carboxy-4-methylthiazol-5(2H)-ylidene]ethyl phosphate is bound at residue 143 to 145 (TST). K146 contributes to the 4-amino-2-methyl-5-(diphosphooxymethyl)pyrimidine binding site. 2-[(2R,5Z)-2-carboxy-4-methylthiazol-5(2H)-ylidene]ethyl phosphate-binding positions include G175 and 195-196 (IS).

This sequence belongs to the thiamine-phosphate synthase family. Requires Mg(2+) as cofactor.

The enzyme catalyses 2-[(2R,5Z)-2-carboxy-4-methylthiazol-5(2H)-ylidene]ethyl phosphate + 4-amino-2-methyl-5-(diphosphooxymethyl)pyrimidine + 2 H(+) = thiamine phosphate + CO2 + diphosphate. It catalyses the reaction 2-(2-carboxy-4-methylthiazol-5-yl)ethyl phosphate + 4-amino-2-methyl-5-(diphosphooxymethyl)pyrimidine + 2 H(+) = thiamine phosphate + CO2 + diphosphate. The catalysed reaction is 4-methyl-5-(2-phosphooxyethyl)-thiazole + 4-amino-2-methyl-5-(diphosphooxymethyl)pyrimidine + H(+) = thiamine phosphate + diphosphate. It participates in cofactor biosynthesis; thiamine diphosphate biosynthesis; thiamine phosphate from 4-amino-2-methyl-5-diphosphomethylpyrimidine and 4-methyl-5-(2-phosphoethyl)-thiazole: step 1/1. Its function is as follows. Condenses 4-methyl-5-(beta-hydroxyethyl)thiazole monophosphate (THZ-P) and 2-methyl-4-amino-5-hydroxymethyl pyrimidine pyrophosphate (HMP-PP) to form thiamine monophosphate (TMP). The protein is Thiamine-phosphate synthase of Bacillus cereus (strain AH187).